We begin with the raw amino-acid sequence, 108 residues long: uncharacterized protein (108 aa).

2 helical membrane-spanning segments follow: residues 51–71 (VFAA…FCFL) and 86–106 (PLST…KSLL).

It localises to the membrane. This is an uncharacterized protein from Saccharomyces cerevisiae (strain ATCC 204508 / S288c) (Baker's yeast).